The primary structure comprises 1538 residues: CLIP-associating protein 1 (1538 aa).

HEAT repeat units follow at residues 87–124 (AQIGTVLPSLIDRLGDAKDSVREQDQTLLLKIMDQAAN) and 163–200 (LTLSKIVPHICNLLGDPNSQVRDAAINSLVEIYRHVGE). A disordered region spans residues 235-292 (SANDKNFDDEDSVDGNRPSSASSTSSKAPPSSRRNVGMGTTRRLGSSTLGSKSSAAKE). The residue at position 246 (S246) is a Phosphoserine. Low complexity predominate over residues 251 to 268 (RPSSASSTSSKAPPSSRR). HEAT repeat units lie at residues 405 to 440 (HGAEAIMPTIFNLIPNSAKIMATSGVVAVRLIIRHT) and 441 to 477 (HIPRLIPVITSNCTSKSVAVRRRCFEFLDLLLQEWQT). The segment at 543 to 783 (SDSIVSLPQS…DRFGLGQPGR (241 aa)) is disordered. Phosphoserine occurs at positions 545, 548, 558, 559, and 568. The span at 548-567 (SLPQSDRSSSSSQESLNRPL) shows a compositional bias: low complexity. A compositionally biased stretch (low complexity) spans 574 to 594 (TGSTTSRASTVSTKSVSTTGS). S600 is subject to Phosphoserine. The segment covering 606-628 (AAASAKSKVSSSSGTTPFSSAAA) has biased composition (low complexity). Residues S636, S646, S647, and S649 each carry the phosphoserine modification. Positions 645-658 (QSSGSATNVASTPD) are enriched in polar residues. Phosphothreonine is present on T656. The tract at residues 662-785 (RSRAKVVSQS…FGLGQPGRIP (124 aa)) is interaction with microtubules, MAPRE1 and MAPRE3. Residues 673 to 692 (RSRSANPAGAGSRSSSPGKL) show a composition bias toward low complexity. Phosphoserine occurs at positions 684, 688, 695, and 705. Residues 693 to 705 (LGSGYGGLTGGSS) show a composition bias toward gly residues. The residue at position 711 (T711) is a Phosphothreonine. S714 is subject to Phosphoserine. The span at 724 to 733 (QGCSRETSPN) shows a compositional bias: polar residues. A phosphoserine mark is found at S787, S797, and S823. Residues 974–1011 (QQFNILMRFIVDQTQTPNLKVKVAILKYIESLARQMDP) form an HEAT 5 repeat. 2 disordered regions span residues 1080-1120 (HLKN…CSHG) and 1136-1156 (AKHPPPFSQPNSIPTAPSHKA). Polar residues predominate over residues 1082 to 1097 (KNSSNTSVGSPSNTIG). A Phosphoserine modification is found at S1091. 2 positions are modified to phosphothreonine: T1095 and T1099. Residues 1106 to 1115 (SRTSPLTSPT) are compositionally biased toward low complexity. Position 1113 is a phosphoserine (S1113). Phosphoserine occurs at positions 1196 and 1223. Positions 1215 to 1238 (VSRDGGAASPATEGRGGSEVEGGR) are disordered. The segment at 1254–1538 (RAFPGPRARD…SSSSDVSTHS (285 aa)) is interaction with CLIP2. The tract at residues 1254 to 1538 (RAFPGPRARD…SSSSDVSTHS (285 aa)) is interaction with PHLDB2 and RSN. Residues 1256-1538 (FPGPRARDYN…SSSSDVSTHS (283 aa)) form a localization to kinetochores region. Positions 1299–1330 (DHSDLVADLLKELSNHNERVEERKGALLELLK) form a coiled coil. HEAT repeat units follow at residues 1342-1379 (EHFKTILLLLLETLGDKDHSIRALALRVLREILRNQPA) and 1460-1497 (QLLVDIIPGLLQGYDNTESSVRKASVFCLVAIYSVIGE).

It belongs to the CLASP family. In terms of assembly, interacts with CLIP2, ERC1, MAPRE1, MAPRE3, microtubules, PHLDB2 and RSN. The interaction with ERC1 may be mediated by PHLDB2. Interacts with GCC2; recruits CLASP1 to Golgi membranes. Interacts with MACF1. Interacts with mtcl2 and MTCL1.

The protein resides in the cytoplasm. Its subcellular location is the cytoskeleton. It is found in the microtubule organizing center. It localises to the centrosome. The protein localises to the chromosome. The protein resides in the centromere. Its subcellular location is the kinetochore. It is found in the spindle. It localises to the golgi apparatus. The protein localises to the trans-Golgi network. In terms of biological role, microtubule plus-end tracking protein that promotes the stabilization of dynamic microtubules. Involved in the nucleation of noncentrosomal microtubules originating from the trans-Golgi network (TGN). Required for the polarization of the cytoplasmic microtubule arrays in migrating cells towards the leading edge of the cell. May act at the cell cortex to enhance the frequency of rescue of depolymerizing microtubules by attaching their plus-ends to cortical platforms composed of ERC1 and PHLDB2. This cortical microtubule stabilizing activity is regulated at least in part by phosphatidylinositol 3-kinase signaling. Also performs a similar stabilizing function at the kinetochore which is essential for the bipolar alignment of chromosomes on the mitotic spindle. The chain is CLIP-associating protein 1 (CLASP1) from Homo sapiens (Human).